The chain runs to 489 residues: Beta-dihydromenaquinone-9 omega-hydroxylase (489 aa).

C435 provides a ligand contact to heme.

Belongs to the cytochrome P450 family. The cofactor is heme.

It localises to the cytoplasm. It catalyses the reaction beta-dihydromenaquinone-9 + 2 reduced [2Fe-2S]-[ferredoxin] + O2 + 2 H(+) = omega-hydroxy-beta-dihydromenaquinone-9 + 2 oxidized [2Fe-2S]-[ferredoxin] + H2O. Involved in the biosynthesis of sulfomenaquinone (SMK, initially named S881 on the basis of its mass), which is localized in the outer envelope of M.bovis and negatively regulates its virulence. Catalyzes the hydroxylation of beta-dihydromenaquinone-9, leading to the formation of omega-hydroxy-beta-dihydromenaquinone-9. The polypeptide is Beta-dihydromenaquinone-9 omega-hydroxylase (cyp128) (Mycobacterium bovis (strain ATCC BAA-935 / AF2122/97)).